The chain runs to 274 residues: 2,3,4,5-tetrahydropyridine-2,6-dicarboxylate N-succinyltransferase (274 aa).

Residues Arg106 and Asp143 each contribute to the substrate site.

The protein belongs to the transferase hexapeptide repeat family. As to quaternary structure, homotrimer.

It localises to the cytoplasm. It carries out the reaction (S)-2,3,4,5-tetrahydrodipicolinate + succinyl-CoA + H2O = (S)-2-succinylamino-6-oxoheptanedioate + CoA. It participates in amino-acid biosynthesis; L-lysine biosynthesis via DAP pathway; LL-2,6-diaminopimelate from (S)-tetrahydrodipicolinate (succinylase route): step 1/3. The polypeptide is 2,3,4,5-tetrahydropyridine-2,6-dicarboxylate N-succinyltransferase (Acidovorax ebreus (strain TPSY) (Diaphorobacter sp. (strain TPSY))).